A 142-amino-acid chain; its full sequence is ATP synthase epsilon chain (142 aa).

This sequence belongs to the ATPase epsilon chain family. F-type ATPases have 2 components, CF(1) - the catalytic core - and CF(0) - the membrane proton channel. CF(1) has five subunits: alpha(3), beta(3), gamma(1), delta(1), epsilon(1). CF(0) has three main subunits: a, b and c.

The protein resides in the cell inner membrane. Functionally, produces ATP from ADP in the presence of a proton gradient across the membrane. The sequence is that of ATP synthase epsilon chain from Shewanella oneidensis (strain ATCC 700550 / JCM 31522 / CIP 106686 / LMG 19005 / NCIMB 14063 / MR-1).